Consider the following 293-residue polypeptide: Protein Pat (293 aa).

One can recognise a BEN domain in the interval 187–287; that stretch reads LPDIILNPLD…LLLRTRQDRA (101 aa).

As to quaternary structure, interacts with poc1b. An mRNA and protein component of germ plasm and primordial germ cells (PGCs) throughout oogenesis and early development, being first localized to the granulo-fibrillar material (GFM) of the mitochondrial cloud in stage I and II oocytes and to the periphery of mature germinal granules both in oocytes and in embryos. Shows some somatic expression including the ectodermal cells of tailbud embryos. In adults, only expressed in ovaries.

The protein localises to the cytoplasm. The protein resides in the nucleus. In terms of biological role, probably plays a role in germ plasm formation, positioning and maintenance. This is Protein Pat from Xenopus laevis (African clawed frog).